A 496-amino-acid polypeptide reads, in one-letter code: Zinc finger protein PLAGL2 (496 aa).

C2H2-type zinc fingers lie at residues 68 to 92, 98 to 120, 127 to 149, 156 to 178, 191 to 213, and 219 to 242; these read YSCP…MATH, HQCM…LQTH, LHCS…LAMH, LSCK…LKAH, HPCD…LVVH, and FLCQ…KKSH.

This sequence belongs to the krueppel C2H2-type zinc-finger protein family.

Its subcellular location is the nucleus. In terms of biological role, shows weak transcriptional activatory activity. This Homo sapiens (Human) protein is Zinc finger protein PLAGL2 (PLAGL2).